The primary structure comprises 179 residues: Peptidyl-tRNA hydrolase 2, mitochondrial (179 aa).

The chain crosses the membrane as a helical span at residues 10–32; sequence YLTNPGALSLAAGVACGVCLGWG. Glycyl lysine isopeptide (Lys-Gly) (interchain with G-Cter in ubiquitin) cross-links involve residues lysine 76, lysine 81, lysine 95, lysine 106, lysine 115, lysine 171, and lysine 177.

It belongs to the PTH2 family. Monomer. Ubiquitinated by PRKN during mitophagy, leading to its degradation and enhancement of mitophagy. Deubiquitinated by USP30.

The protein resides in the mitochondrion outer membrane. It carries out the reaction an N-acyl-L-alpha-aminoacyl-tRNA + H2O = an N-acyl-L-amino acid + a tRNA + H(+). Functionally, peptidyl-tRNA hydrolase which releases tRNAs from the ribosome during protein synthesis. Promotes caspase-independent apoptosis by regulating the function of two transcriptional regulators, AES and TLE1. The polypeptide is Peptidyl-tRNA hydrolase 2, mitochondrial (PTRH2) (Bos taurus (Bovine)).